The following is a 362-amino-acid chain: Formyltransferase/hydrolase complex Fhc subunit B (362 aa).

As to quaternary structure, octaheteromer. Part of the formyltransferase/hydrolase complex fhc; composed of FhcA, FhcB, FhcC and FhcD.

The protein resides in the cytoplasm. It participates in one-carbon metabolism; formaldehyde degradation; formate from formaldehyde (H(4)MPT route): step 4/5. Involved in the transformation of 5-formyl tetrahydromethanopterin (5-formyl-H(4)MPT) to methanofuran (MFR) and formate via the formylmethanofuran (formyl-MFR). This Methylorubrum extorquens (strain ATCC 14718 / DSM 1338 / JCM 2805 / NCIMB 9133 / AM1) (Methylobacterium extorquens) protein is Formyltransferase/hydrolase complex Fhc subunit B (fhcB).